The primary structure comprises 131 residues: Peptide methionine sulfoxide reductase MsrB (131 aa).

Residues 8 to 130 (LDEWRSMLDP…NSVCIDLRPR (123 aa)) form the MsrB domain. Zn(2+) contacts are provided by Cys47, Cys50, Cys96, and Cys99. Cys119 serves as the catalytic Nucleophile.

Belongs to the MsrB Met sulfoxide reductase family. The cofactor is Zn(2+).

It catalyses the reaction L-methionyl-[protein] + [thioredoxin]-disulfide + H2O = L-methionyl-(R)-S-oxide-[protein] + [thioredoxin]-dithiol. This Pseudomonas putida (strain ATCC 700007 / DSM 6899 / JCM 31910 / BCRC 17059 / LMG 24140 / F1) protein is Peptide methionine sulfoxide reductase MsrB.